The chain runs to 249 residues: Electron transfer flavoprotein subunit beta (249 aa).

Belongs to the ETF beta-subunit/FixA family. Heterodimer of an alpha and a beta subunit. FAD is required as a cofactor. It depends on AMP as a cofactor.

The electron transfer flavoprotein serves as a specific electron acceptor for other dehydrogenases. It transfers the electrons to the main respiratory chain via ETF-ubiquinone oxidoreductase (ETF dehydrogenase). The polypeptide is Electron transfer flavoprotein subunit beta (etfB) (Pseudomonas aeruginosa (strain ATCC 15692 / DSM 22644 / CIP 104116 / JCM 14847 / LMG 12228 / 1C / PRS 101 / PAO1)).